The primary structure comprises 369 residues: Phospho-N-acetylmuramoyl-pentapeptide-transferase (369 aa).

Transmembrane regions (helical) follow at residues 2-22 (IPLLMGAGISLALVMIGTQLF), 55-75 (AVVIGTVILAYLLTHLISWWI), 82-102 (PSVSGWLLLLLMAGMGLVGFL), 120-140 (AKLILQAAIGILFAVLAINFA), 163-183 (LAFAGAGLGVLLFVIWANLII), 196-216 (LDGLAAGASVMVFGAYTLIGI), 240-260 (PLDLALLAAIIFGALIGFLWW), 267-287 (IFMGDTGSLAIGGAIAGFAIL), 292-312 (ILLAIIGGLFVLITLSVILQV), and 349-369 (ILGGLLVAIGLGAFYAEWVVF).

The protein belongs to the glycosyltransferase 4 family. MraY subfamily. It depends on Mg(2+) as a cofactor.

It localises to the cell membrane. The catalysed reaction is UDP-N-acetyl-alpha-D-muramoyl-L-alanyl-gamma-D-glutamyl-meso-2,6-diaminopimeloyl-D-alanyl-D-alanine + di-trans,octa-cis-undecaprenyl phosphate = di-trans,octa-cis-undecaprenyl diphospho-N-acetyl-alpha-D-muramoyl-L-alanyl-D-glutamyl-meso-2,6-diaminopimeloyl-D-alanyl-D-alanine + UMP. Its pathway is cell wall biogenesis; peptidoglycan biosynthesis. Functionally, catalyzes the initial step of the lipid cycle reactions in the biosynthesis of the cell wall peptidoglycan: transfers peptidoglycan precursor phospho-MurNAc-pentapeptide from UDP-MurNAc-pentapeptide onto the lipid carrier undecaprenyl phosphate, yielding undecaprenyl-pyrophosphoryl-MurNAc-pentapeptide, known as lipid I. This chain is Phospho-N-acetylmuramoyl-pentapeptide-transferase, found in Renibacterium salmoninarum (strain ATCC 33209 / DSM 20767 / JCM 11484 / NBRC 15589 / NCIMB 2235).